A 237-amino-acid polypeptide reads, in one-letter code: uncharacterized protein (237 aa).

The N-terminal stretch at 1–28 is a signal peptide; it reads MVFSFSTFNRLVTFTVMAAIVSVRPLTA.

This is an uncharacterized protein from Sinorhizobium fredii (strain NBRC 101917 / NGR234).